Consider the following 725-residue polypeptide: DNA replication licensing factor MCM7 (725 aa).

In terms of domain architecture, MCM spans 333–538 (IYNKLARSLA…METDLEMARH (206 aa)). 383–390 (GDPGVAKS) contacts ATP. Positions 515–518 (SRFD) match the Arginine finger motif.

It belongs to the MCM family. In terms of assembly, component of the minichromosome maintenance (MCM) complex, a heterotetramer composed of MCM2, MCM3, MCM4, MCM5, MCM6 and MCM7.

It localises to the nucleus. The enzyme catalyses ATP + H2O = ADP + phosphate + H(+). Functionally, probable component of the MCM2-7 complex (MCM complex) that may function as a DNA helicase and which is essential to undergo a single round of replication initiation and elongation per cell cycle in eukaryotic cells. In Oryza sativa subsp. indica (Rice), this protein is DNA replication licensing factor MCM7 (MCM7).